The sequence spans 248 residues: Deoxyribose-phosphate aldolase (248 aa).

Asp106 acts as the Proton donor/acceptor in catalysis. The Schiff-base intermediate with acetaldehyde role is filled by Lys168. Lys197 acts as the Proton donor/acceptor in catalysis.

Belongs to the DeoC/FbaB aldolase family. DeoC type 1 subfamily.

The protein localises to the cytoplasm. The catalysed reaction is 2-deoxy-D-ribose 5-phosphate = D-glyceraldehyde 3-phosphate + acetaldehyde. Its pathway is carbohydrate degradation; 2-deoxy-D-ribose 1-phosphate degradation; D-glyceraldehyde 3-phosphate and acetaldehyde from 2-deoxy-alpha-D-ribose 1-phosphate: step 2/2. Catalyzes a reversible aldol reaction between acetaldehyde and D-glyceraldehyde 3-phosphate to generate 2-deoxy-D-ribose 5-phosphate. The sequence is that of Deoxyribose-phosphate aldolase from Rhizobium meliloti (strain 1021) (Ensifer meliloti).